Here is a 1378-residue protein sequence, read N- to C-terminus: DNA-directed RNA polymerase subunit beta (1378 aa).

The protein belongs to the RNA polymerase beta chain family. In terms of assembly, the RNAP catalytic core consists of 2 alpha, 1 beta, 1 beta' and 1 omega subunit. When a sigma factor is associated with the core the holoenzyme is formed, which can initiate transcription.

It carries out the reaction RNA(n) + a ribonucleoside 5'-triphosphate = RNA(n+1) + diphosphate. Functionally, DNA-dependent RNA polymerase catalyzes the transcription of DNA into RNA using the four ribonucleoside triphosphates as substrates. The protein is DNA-directed RNA polymerase subunit beta of Mesorhizobium japonicum (strain LMG 29417 / CECT 9101 / MAFF 303099) (Mesorhizobium loti (strain MAFF 303099)).